A 324-amino-acid chain; its full sequence is UDP-N-acetylenolpyruvoylglucosamine reductase (324 aa).

The region spanning 36-211 (FRAGGLAELM…AEDKAKIRND (176 aa)) is the FAD-binding PCMH-type domain. R183 is an active-site residue. The active-site Proton donor is S232. E302 is a catalytic residue.

It belongs to the MurB family. FAD serves as cofactor.

It localises to the cytoplasm. The catalysed reaction is UDP-N-acetyl-alpha-D-muramate + NADP(+) = UDP-N-acetyl-3-O-(1-carboxyvinyl)-alpha-D-glucosamine + NADPH + H(+). It functions in the pathway cell wall biogenesis; peptidoglycan biosynthesis. Its function is as follows. Cell wall formation. This chain is UDP-N-acetylenolpyruvoylglucosamine reductase, found in Sinorhizobium medicae (strain WSM419) (Ensifer medicae).